We begin with the raw amino-acid sequence, 349 residues long: Putative nuclease HARBI1 (349 aa).

Residues Asp-149, Asp-199, Asp-225, and Glu-261 each coordinate a divalent metal cation. The DDE Tnp4 domain maps to 149–300 (DCIHVAIKAP…IILACCVLHN (152 aa)).

This sequence belongs to the HARBI1 family. Interacts with NAIF1. The cofactor is a divalent metal cation. In terms of tissue distribution, detected in adult brain, eye, nerve tissue and lung. Detected in embryo.

Its subcellular location is the nucleus. It localises to the cytoplasm. In terms of biological role, transposase-derived protein that may have nuclease activity (Potential). Does not have transposase activity. The protein is Putative nuclease HARBI1 (Harbi1) of Mus musculus (Mouse).